A 149-amino-acid polypeptide reads, in one-letter code: Nucleoside diphosphate kinase 1 (149 aa).

6 residues coordinate ATP: Lys-9, Phe-57, Arg-85, Thr-91, Arg-102, and Asn-112. Catalysis depends on His-115, which acts as the Pros-phosphohistidine intermediate.

This sequence belongs to the NDK family. Homohexamer. Can also form dodecamers. Requires Mg(2+) as cofactor.

Its subcellular location is the nucleus. It carries out the reaction a 2'-deoxyribonucleoside 5'-diphosphate + ATP = a 2'-deoxyribonucleoside 5'-triphosphate + ADP. It catalyses the reaction a ribonucleoside 5'-diphosphate + ATP = a ribonucleoside 5'-triphosphate + ADP. Its function is as follows. Major role in the synthesis of nucleoside triphosphates other than ATP. The ATP gamma phosphate is transferred to the NDP beta phosphate via a ping-pong mechanism, using a phosphorylated active-site intermediate. Involved in transcription regulation. Has G-quadruplex (G4) DNA-binding activity, which is independent of its nucleotide-binding and kinase activity. Binds folded G4 with low nanomolar affinity and corresponding unfolded G-rich DNA more weakly. Stabilizes folded G4s regardless of whether they are prefolded or not. The polypeptide is Nucleoside diphosphate kinase 1 (Zea mays (Maize)).